Consider the following 71-residue polypeptide: Heat-stable enterotoxin B (71 aa).

The first 19 residues, 1–19 (MKKIILALVLMLFSFCTLG), serve as a signal peptide directing secretion. Residues 20 to 52 (QETASMHLDDTLSAPIAAEINRKACDTQTPSPS) constitute a propeptide that is removed on maturation. 3 cysteine pairs are disulfide-bonded: cysteine 59–cysteine 64, cysteine 60–cysteine 68, and cysteine 63–cysteine 71.

The protein belongs to the heat-stable enterotoxin family.

Its subcellular location is the secreted. In terms of biological role, toxin which activates the particulate form of guanylate cyclase and increases cyclic GMP levels within the host intestinal epithelial cells. Could play an important role in pathogenesis. The polypeptide is Heat-stable enterotoxin B (ystB) (Yersinia enterocolitica).